Consider the following 443-residue polypeptide: Glutamyl-tRNA reductase (443 aa).

Substrate is bound by residues T49–R52, S109, E114–Q116, and Q120. C50 serves as the catalytic Nucleophile. NADP(+) is bound at residue G189 to S194.

The protein belongs to the glutamyl-tRNA reductase family. In terms of assembly, homodimer.

The catalysed reaction is (S)-4-amino-5-oxopentanoate + tRNA(Glu) + NADP(+) = L-glutamyl-tRNA(Glu) + NADPH + H(+). Its pathway is porphyrin-containing compound metabolism; protoporphyrin-IX biosynthesis; 5-aminolevulinate from L-glutamyl-tRNA(Glu): step 1/2. Functionally, catalyzes the NADPH-dependent reduction of glutamyl-tRNA(Glu) to glutamate 1-semialdehyde (GSA). The chain is Glutamyl-tRNA reductase from Heliobacterium mobile (Heliobacillus mobilis).